The chain runs to 142 residues: Photosystem II extrinsic protein U (142 aa).

A signal peptide spans 1-29; sequence MKGLVRLLTVFSLLLGCWGWLGTTQIAQA.

This sequence belongs to the PsbU family. PSII is composed of 1 copy each of membrane proteins PsbA, PsbB, PsbC, PsbD, PsbE, PsbF, PsbH, PsbI, PsbJ, PsbK, PsbL, PsbM, PsbT, PsbX, PsbY, PsbZ, Psb30/Ycf12, peripheral proteins PsbO, CyanoQ (PsbQ), PsbU, PsbV and a large number of cofactors. It forms dimeric complexes.

It is found in the cellular thylakoid membrane. In terms of biological role, one of the extrinsic, lumenal subunits of photosystem II (PSII). PSII is a light-driven water plastoquinone oxidoreductase, using light energy to abstract electrons from H(2)O, generating a proton gradient subsequently used for ATP formation. The extrinsic proteins stabilize the structure of photosystem II oxygen-evolving complex (OEC), the ion environment of oxygen evolution and protect the OEC against heat-induced inactivation. In Nostoc sp. (strain PCC 7120 / SAG 25.82 / UTEX 2576), this protein is Photosystem II extrinsic protein U.